The primary structure comprises 62 residues: Photosystem II reaction center protein Z (62 aa).

Transmembrane regions (helical) follow at residues 8–28 (ALLL…VLYA) and 41–61 (LVGG…NYFV).

It belongs to the PsbZ family. PSII is composed of 1 copy each of membrane proteins PsbA, PsbB, PsbC, PsbD, PsbE, PsbF, PsbH, PsbI, PsbJ, PsbK, PsbL, PsbM, PsbT, PsbX, PsbY, PsbZ, Psb30/Ycf12, peripheral proteins PsbO, CyanoQ (PsbQ), PsbU, PsbV and a large number of cofactors. It forms dimeric complexes.

The protein localises to the cellular thylakoid membrane. Functionally, may control the interaction of photosystem II (PSII) cores with the light-harvesting antenna, regulates electron flow through the 2 photosystem reaction centers. PSII is a light-driven water plastoquinone oxidoreductase, using light energy to abstract electrons from H(2)O, generating a proton gradient subsequently used for ATP formation. This chain is Photosystem II reaction center protein Z, found in Synechococcus elongatus (strain ATCC 33912 / PCC 7942 / FACHB-805) (Anacystis nidulans R2).